The chain runs to 180 residues: Symerythrin (180 aa).

Positions 17-127 form a cross-link, 3-(L-phenylalan-2'-yl)-L-valine (Phe-Val); the sequence is FQDAVSHNNT…RRALETALEV (111 aa). In terms of domain architecture, Ferritin-like diiron spans 21–180; it reads VSHNNTDANA…RALENLLEVA (160 aa). Fe(3+)-binding residues include Glu-37, Glu-40, Glu-71, Glu-128, Glu-131, Glu-162, and His-165.

As to quaternary structure, monomer. It depends on Fe(3+) as a cofactor.

The protein localises to the plastid. Its subcellular location is the cyanelle. In terms of biological role, exhibits oxidase-like and peroxidase-like activities in vitro. This is Symerythrin from Cyanophora paradoxa.